The chain runs to 200 residues: Small ribosomal subunit protein uS4 (200 aa).

The S4 RNA-binding domain maps to 92 to 155; that stretch reads SRLDNLVYRM…RNLTVVKEAL (64 aa).

Belongs to the universal ribosomal protein uS4 family. Part of the 30S ribosomal subunit. Contacts protein S5. The interaction surface between S4 and S5 is involved in control of translational fidelity.

Its function is as follows. One of the primary rRNA binding proteins, it binds directly to 16S rRNA where it nucleates assembly of the body of the 30S subunit. Functionally, with S5 and S12 plays an important role in translational accuracy. This is Small ribosomal subunit protein uS4 from Shouchella clausii (strain KSM-K16) (Alkalihalobacillus clausii).